The chain runs to 311 residues: Aspartate carbamoyltransferase catalytic subunit (311 aa).

The carbamoyl phosphate site is built by Arg59 and Thr60. Lys87 lines the L-aspartate pocket. Carbamoyl phosphate-binding residues include Arg109, His139, and Gln142. 2 residues coordinate L-aspartate: Arg172 and Arg224. Residues Ala265 and Pro266 each contribute to the carbamoyl phosphate site.

The protein belongs to the aspartate/ornithine carbamoyltransferase superfamily. ATCase family. Heterododecamer (2C3:3R2) of six catalytic PyrB chains organized as two trimers (C3), and six regulatory PyrI chains organized as three dimers (R2).

The catalysed reaction is carbamoyl phosphate + L-aspartate = N-carbamoyl-L-aspartate + phosphate + H(+). It participates in pyrimidine metabolism; UMP biosynthesis via de novo pathway; (S)-dihydroorotate from bicarbonate: step 2/3. Catalyzes the condensation of carbamoyl phosphate and aspartate to form carbamoyl aspartate and inorganic phosphate, the committed step in the de novo pyrimidine nucleotide biosynthesis pathway. The chain is Aspartate carbamoyltransferase catalytic subunit from Streptococcus pyogenes serotype M4 (strain MGAS10750).